Consider the following 335-residue polypeptide: Tetraacyldisaccharide 4'-kinase (335 aa).

58–65 (TVGGSGKT) lines the ATP pocket.

Belongs to the LpxK family.

It carries out the reaction a lipid A disaccharide + ATP = a lipid IVA + ADP + H(+). It participates in glycolipid biosynthesis; lipid IV(A) biosynthesis; lipid IV(A) from (3R)-3-hydroxytetradecanoyl-[acyl-carrier-protein] and UDP-N-acetyl-alpha-D-glucosamine: step 6/6. Transfers the gamma-phosphate of ATP to the 4'-position of a tetraacyldisaccharide 1-phosphate intermediate (termed DS-1-P) to form tetraacyldisaccharide 1,4'-bis-phosphate (lipid IVA). The chain is Tetraacyldisaccharide 4'-kinase from Shewanella sp. (strain ANA-3).